The primary structure comprises 282 residues: Ribosomal RNA small subunit methyltransferase A (282 aa).

The tract at residues 1–21 (MPDFPKEHATPMSNRPPAHQA) is disordered. The S-adenosyl-L-methionine site is built by Asn-28, Leu-30, Gly-55, Glu-76, Asp-101, and Asn-126.

This sequence belongs to the class I-like SAM-binding methyltransferase superfamily. rRNA adenine N(6)-methyltransferase family. RsmA subfamily.

It is found in the cytoplasm. It catalyses the reaction adenosine(1518)/adenosine(1519) in 16S rRNA + 4 S-adenosyl-L-methionine = N(6)-dimethyladenosine(1518)/N(6)-dimethyladenosine(1519) in 16S rRNA + 4 S-adenosyl-L-homocysteine + 4 H(+). Specifically dimethylates two adjacent adenosines (A1518 and A1519) in the loop of a conserved hairpin near the 3'-end of 16S rRNA in the 30S particle. May play a critical role in biogenesis of 30S subunits. In Chromohalobacter salexigens (strain ATCC BAA-138 / DSM 3043 / CIP 106854 / NCIMB 13768 / 1H11), this protein is Ribosomal RNA small subunit methyltransferase A.